A 212-amino-acid chain; its full sequence is External core antigen (212 aa).

A signal peptide spans 1-19 (MQLFHLCLIISCSCPTVQA). The interval 25–27 (GWL) is HBEAG. A disordered region spans residues 172–212 (LPETAVVRRRGRSPRRRTPSPRRRRSQSPRRRRSQSPASQC). Positions 178 to 205 (VRRRGRSPRRRTPSPRRRRSQSPRRRRS) are enriched in basic residues. One copy of the 1; half-length repeat lies at 184 to 190 (SPRRRTP). Residues 184–206 (SPRRRTPSPRRRRSQSPRRRRSQ) form a 3 X 8 AA repeats of S-P-R-R-R-R-S-Q region. Residues 184–212 (SPRRRTPSPRRRRSQSPRRRRSQSPASQC) constitute a propeptide that is removed on maturation. 2 tandem repeats follow at residues 191–198 (SPRRRRSQ) and 199–206 (SPRRRRSQ).

This sequence belongs to the orthohepadnavirus precore antigen family. In terms of assembly, homodimerizes. Post-translationally, phosphorylated. In terms of processing, cleaved by host furin.

It is found in the secreted. It localises to the host nucleus. In terms of biological role, may regulate immune response to the intracellular capsid in acting as a T-cell tolerogen, by having an immunoregulatory effect which prevents destruction of infected cells by cytotoxic T-cells. This immune regulation may predispose to chronicity during perinatal infections and prevent severe liver injury during adult infections. This Gorilla gorilla (western gorilla) protein is External core antigen.